The primary structure comprises 288 residues: Protein shisa-2 (288 aa).

The first 23 residues, Met1–Ala23, serve as a signal peptide directing secretion. Topologically, residues Ala24–Pro110 are extracellular. Residues Phe111–Cys131 traverse the membrane as a helical segment. Topologically, residues Cys132–Val288 are cytoplasmic. Residues Ser161–Ala188 are compositionally biased toward low complexity. Residues Ser161–Asn198 are disordered.

Belongs to the shisa family. In terms of assembly, interacts with fzd8 and fgfr1.

It localises to the endoplasmic reticulum membrane. Plays an essential role in the maturation of presomitic mesoderm cells by individual attenuation of both fgf and wnt signaling. Inhibits both wnt and fgf signaling through the regulation of protein maturation and cell surface transportation of their receptors within the endoplasmic reticulum. The protein is Protein shisa-2 (shisa2) of Xenopus laevis (African clawed frog).